A 1128-amino-acid chain; its full sequence is Nck-associated protein 1 (1128 aa).

Residues 640-665 (AVNKKSKKQTGKKGEPEREKPGVESM) are disordered. Positions 651–665 (KKGEPEREKPGVESM) are enriched in basic and acidic residues. Residues 995-1015 (IACLLMVFVAVSLPTLASNVM) form a helical membrane-spanning segment.

This sequence belongs to the HEM-1/HEM-2 family.

It localises to the cell membrane. It is found in the cell projection. The protein resides in the lamellipodium membrane. Its function is as follows. Part of the WAVE complex that regulates lamellipodia formation. The WAVE complex regulates actin filament reorganization via its interaction with the Arp2/3 complex. Actin remodeling activity is regulated by RAC1. Plays a role in neural tube closure. The sequence is that of Nck-associated protein 1 (nckap1) from Xenopus laevis (African clawed frog).